We begin with the raw amino-acid sequence, 208 residues long: Thymidylate kinase (208 aa).

11–18 provides a ligand contact to ATP; that stretch reads GIEGAGKT.

This sequence belongs to the thymidylate kinase family.

It carries out the reaction dTMP + ATP = dTDP + ADP. In terms of biological role, phosphorylation of dTMP to form dTDP in both de novo and salvage pathways of dTTP synthesis. This Hahella chejuensis (strain KCTC 2396) protein is Thymidylate kinase.